We begin with the raw amino-acid sequence, 162 residues long: 2-C-methyl-D-erythritol 2,4-cyclodiphosphate synthase (162 aa).

A divalent metal cation-binding residues include D10 and H12. 4-CDP-2-C-methyl-D-erythritol 2-phosphate is bound by residues 10 to 12 and 36 to 37; these read DVH and HS. H44 lines the a divalent metal cation pocket. 4-CDP-2-C-methyl-D-erythritol 2-phosphate-binding positions include 58–60, 63–67, 102–108, 134–137, F141, and R144; these read DIG, FPDTD, AQAPRMA, and TTSE.

This sequence belongs to the IspF family. In terms of assembly, homotrimer. The cofactor is a divalent metal cation.

It catalyses the reaction 4-CDP-2-C-methyl-D-erythritol 2-phosphate = 2-C-methyl-D-erythritol 2,4-cyclic diphosphate + CMP. It functions in the pathway isoprenoid biosynthesis; isopentenyl diphosphate biosynthesis via DXP pathway; isopentenyl diphosphate from 1-deoxy-D-xylulose 5-phosphate: step 4/6. Its function is as follows. Involved in the biosynthesis of isopentenyl diphosphate (IPP) and dimethylallyl diphosphate (DMAPP), two major building blocks of isoprenoid compounds. Catalyzes the conversion of 4-diphosphocytidyl-2-C-methyl-D-erythritol 2-phosphate (CDP-ME2P) to 2-C-methyl-D-erythritol 2,4-cyclodiphosphate (ME-CPP) with a corresponding release of cytidine 5-monophosphate (CMP). The polypeptide is 2-C-methyl-D-erythritol 2,4-cyclodiphosphate synthase (Chromohalobacter salexigens (strain ATCC BAA-138 / DSM 3043 / CIP 106854 / NCIMB 13768 / 1H11)).